The primary structure comprises 349 residues: Magnesium-protoporphyrin IX monomethyl ester [oxidative] cyclase (349 aa).

This sequence belongs to the AcsF family. Fe cation is required as a cofactor.

Its subcellular location is the plastid. The protein resides in the chloroplast. The enzyme catalyses Mg-protoporphyrin IX 13-monomethyl ester + 3 NADPH + 3 O2 + 2 H(+) = 3,8-divinyl protochlorophyllide a + 3 NADP(+) + 5 H2O. Its pathway is porphyrin-containing compound metabolism; chlorophyll biosynthesis (light-independent). Catalyzes the formation of the isocyclic ring in chlorophyll biosynthesis. Mediates the cyclase reaction, which results in the formation of divinylprotochlorophyllide (Pchlide) characteristic of all chlorophylls from magnesium-protoporphyrin IX 13-monomethyl ester (MgPMME). The sequence is that of Magnesium-protoporphyrin IX monomethyl ester [oxidative] cyclase from Pyropia yezoensis (Susabi-nori).